Here is a 184-residue protein sequence, read N- to C-terminus: dTTP/UTP pyrophosphatase (184 aa).

The active-site Proton acceptor is Asp-65.

Belongs to the Maf family. YhdE subfamily. It depends on a divalent metal cation as a cofactor.

Its subcellular location is the cytoplasm. It catalyses the reaction dTTP + H2O = dTMP + diphosphate + H(+). The catalysed reaction is UTP + H2O = UMP + diphosphate + H(+). In terms of biological role, nucleoside triphosphate pyrophosphatase that hydrolyzes dTTP and UTP. May have a dual role in cell division arrest and in preventing the incorporation of modified nucleotides into cellular nucleic acids. In Thermococcus onnurineus (strain NA1), this protein is dTTP/UTP pyrophosphatase.